Reading from the N-terminus, the 418-residue chain is Actin-related protein 3 (418 aa).

It belongs to the actin family. ARP3 subfamily. As to quaternary structure, component of the Arp2/3 complex.

It is found in the cytoplasm. Its subcellular location is the cytoskeleton. Functions as ATP-binding component of the Arp2/3 complex which is involved in regulation of actin polymerization and together with an activating nucleation-promoting factor (NPF) mediates the formation of branched actin networks. Seems to contact the pointed end of the daughter actin filament. Required during embryogenesis for the developmental migration of tail hemocytes anteriorly, along the ventral midline. This is Actin-related protein 3 from Drosophila melanogaster (Fruit fly).